We begin with the raw amino-acid sequence, 447 residues long: Phosphoglucosamine mutase (447 aa).

Ser-104 serves as the catalytic Phosphoserine intermediate. The Mg(2+) site is built by Ser-104, Asp-243, Asp-245, and Asp-247. Position 104 is a phosphoserine (Ser-104).

Belongs to the phosphohexose mutase family. Mg(2+) serves as cofactor. Post-translationally, activated by phosphorylation.

The enzyme catalyses alpha-D-glucosamine 1-phosphate = D-glucosamine 6-phosphate. In terms of biological role, catalyzes the conversion of glucosamine-6-phosphate to glucosamine-1-phosphate. This chain is Phosphoglucosamine mutase, found in Corynebacterium aurimucosum (strain ATCC 700975 / DSM 44827 / CIP 107346 / CN-1) (Corynebacterium nigricans).